A 160-amino-acid polypeptide reads, in one-letter code: Sulfur-rich protein (160 aa).

Helical transmembrane passes span 63-83 and 92-112; these read ITMV…TFVL and FLFL…SVCM.

It localises to the membrane. The protein is Sulfur-rich protein (srp) of Chlamydophila psittaci (strain ATCC VR-125 / 6BC) (Chlamydia psittaci).